Consider the following 1246-residue polypeptide: Putative helicase L115 (1246 aa).

The tract at residues 1–21 (MSKTITKKVNKKTKKSTKINP) is disordered. In terms of domain architecture, Helicase ATP-binding spans 872–1030 (AKFTDGYHGF…YYMLKMLQTG (159 aa)). Residue 885 to 892 (SDVGSGKT) coordinates ATP.

This is Putative helicase L115 from Acanthamoeba polyphaga (Amoeba).